Here is a 357-residue protein sequence, read N- to C-terminus: tRNA N6-adenosine threonylcarbamoyltransferase (357 aa).

Histidine 113 and histidine 117 together coordinate Fe cation. Residues 136–140, aspartate 169, glycine 182, and asparagine 288 each bind substrate; that span reads LVSGG. Aspartate 316 serves as a coordination point for Fe cation.

The protein belongs to the KAE1 / TsaD family. Fe(2+) serves as cofactor.

It is found in the cytoplasm. The enzyme catalyses L-threonylcarbamoyladenylate + adenosine(37) in tRNA = N(6)-L-threonylcarbamoyladenosine(37) in tRNA + AMP + H(+). Functionally, required for the formation of a threonylcarbamoyl group on adenosine at position 37 (t(6)A37) in tRNAs that read codons beginning with adenine. Is involved in the transfer of the threonylcarbamoyl moiety of threonylcarbamoyl-AMP (TC-AMP) to the N6 group of A37, together with TsaE and TsaB. TsaD likely plays a direct catalytic role in this reaction. The protein is tRNA N6-adenosine threonylcarbamoyltransferase of Gemmatimonas aurantiaca (strain DSM 14586 / JCM 11422 / NBRC 100505 / T-27).